A 211-amino-acid polypeptide reads, in one-letter code: Proline-rich 33 kDa extensin-related protein (211 aa).

The first 14 residues, 1 to 14 (AILGVAIFAAPSLA), serve as a signal peptide directing secretion. Pro residues-rich tracts occupy residues 25–59 (PPVY…PVHK) and 82–93 (HKPPVYKPPVQK). The disordered stretch occupies residues 25-211 (PPVYTPPVHK…RHPPVENTGN (187 aa)). 2 stretches are compositionally biased toward basic residues: residues 101–111 (PVHKPPIHKPP) and 127–139 (PIHK…RPPV). Composition is skewed to basic and acidic residues over residues 142 to 159 (PPTE…EHKP) and 167 to 177 (KTEKPVPEHKP). A compositionally biased stretch (pro residues) spans 179 to 198 (HLPPIVVRPPPTHKPNPPYG).

The protein belongs to the plant proline-rich protein superfamily. ENOD12 family.

The protein resides in the secreted. It localises to the cell wall. This is Proline-rich 33 kDa extensin-related protein from Daucus carota (Wild carrot).